We begin with the raw amino-acid sequence, 192 residues long: Pupal cuticle protein (192 aa).

The first 15 residues, 1–15, serve as a signal peptide directing secretion; it reads MHLLMSLFGVLAVMQ. The region spanning 45-106 is the Chitin-binding type R&amp;R domain; that stretch reads DGNYRYAYET…PVGDHIPKVP (62 aa). Polar residues predominate over residues 149 to 163; it reads QDQTTPRSRPSSTPK. A disordered region spans residues 149–192; sequence QDQTTPRSRPSSTPKTIYLTHPPTLSDAPTRRPLRQRQNDSRRR.

Functionally, component of the cuticle of the pupa of fruit fly. This Drosophila pseudoobscura pseudoobscura (Fruit fly) protein is Pupal cuticle protein (Pcp).